Reading from the N-terminus, the 185-residue chain is Large ribosomal subunit protein uL5 (185 aa).

This sequence belongs to the universal ribosomal protein uL5 family. As to quaternary structure, part of the 50S ribosomal subunit; part of the 5S rRNA/L5/L18/L25 subcomplex. Contacts the 5S rRNA and the P site tRNA. Forms a bridge to the 30S subunit in the 70S ribosome.

This is one of the proteins that bind and probably mediate the attachment of the 5S RNA into the large ribosomal subunit, where it forms part of the central protuberance. In the 70S ribosome it contacts protein S13 of the 30S subunit (bridge B1b), connecting the 2 subunits; this bridge is implicated in subunit movement. Contacts the P site tRNA; the 5S rRNA and some of its associated proteins might help stabilize positioning of ribosome-bound tRNAs. In Rhizobium etli (strain ATCC 51251 / DSM 11541 / JCM 21823 / NBRC 15573 / CFN 42), this protein is Large ribosomal subunit protein uL5.